Consider the following 92-residue polypeptide: Large ribosomal subunit protein eL43 (92 aa).

A C4-type zinc finger spans residues 39-60; the sequence is CQFCGKDAMKRQAVGIWGCKSC.

Belongs to the eukaryotic ribosomal protein eL43 family.

The polypeptide is Large ribosomal subunit protein eL43 (RPL37A) (Cryptochiton stelleri (Giant gumboot chiton)).